The sequence spans 160 residues: MRLVLACVGRLKAGAERDLVTRYVDRIRPAGRPLGLGPCDMIEIPESAARRAEDRMAEEGAALLAALPAGAGLIALDPRGRQLSSEDFATRMAAQRDGGLPALAFIIGGADGLADAVRDKAALMVAYGTATFPHQLVRVMLAEQIYRAVTILAGHPYHRA.

Residues Leu76 and Gly108 each contribute to the S-adenosyl-L-methionine site.

This sequence belongs to the RNA methyltransferase RlmH family. In terms of assembly, homodimer.

It is found in the cytoplasm. The catalysed reaction is pseudouridine(1915) in 23S rRNA + S-adenosyl-L-methionine = N(3)-methylpseudouridine(1915) in 23S rRNA + S-adenosyl-L-homocysteine + H(+). In terms of biological role, specifically methylates the pseudouridine at position 1915 (m3Psi1915) in 23S rRNA. The chain is Ribosomal RNA large subunit methyltransferase H from Xanthobacter autotrophicus (strain ATCC BAA-1158 / Py2).